Consider the following 360-residue polypeptide: Phospho-N-acetylmuramoyl-pentapeptide-transferase (360 aa).

Transmembrane regions (helical) follow at residues 27–47, 73–93, 94–114, 132–152, 168–188, 199–219, 236–256, 263–283, 288–308, and 338–358; these read IVSLLTALVISLWMGPHMIAW, TMGGVMILVAIIVSVLMWANL, SNPYVWCVLLVLAGYGAVGFV, WKYFWQSVIALVVAFSMYAIG, VMPQLGLLYVALAYFVIVGTS, GLAIMPTVFVAAGFALVAWAT, ASELVIVCTAIVGAGLGFLWF, VFMGDVGSLALGGALGTIAVL, FLLVIMGGVFVVETLSVILQV, and VIVRFWIISLMLVLIGLATLK.

It belongs to the glycosyltransferase 4 family. MraY subfamily. Mg(2+) is required as a cofactor.

It localises to the cell inner membrane. The enzyme catalyses UDP-N-acetyl-alpha-D-muramoyl-L-alanyl-gamma-D-glutamyl-meso-2,6-diaminopimeloyl-D-alanyl-D-alanine + di-trans,octa-cis-undecaprenyl phosphate = di-trans,octa-cis-undecaprenyl diphospho-N-acetyl-alpha-D-muramoyl-L-alanyl-D-glutamyl-meso-2,6-diaminopimeloyl-D-alanyl-D-alanine + UMP. It participates in cell wall biogenesis; peptidoglycan biosynthesis. In terms of biological role, catalyzes the initial step of the lipid cycle reactions in the biosynthesis of the cell wall peptidoglycan: transfers peptidoglycan precursor phospho-MurNAc-pentapeptide from UDP-MurNAc-pentapeptide onto the lipid carrier undecaprenyl phosphate, yielding undecaprenyl-pyrophosphoryl-MurNAc-pentapeptide, known as lipid I. This chain is Phospho-N-acetylmuramoyl-pentapeptide-transferase, found in Pectobacterium carotovorum subsp. carotovorum (strain PC1).